Here is a 277-residue protein sequence, read N- to C-terminus: Carbonyl reductase [NADPH] 3 (277 aa).

At Ser2 the chain carries N-acetylserine. Residues 10–34, 38–42, 63–64, and Asn90 contribute to the NADP(+) site; these read VTGANRGIGLAIARELCRQFSGDVV, RDVAR, and DI. Ser30 carries the post-translational modification Phosphoserine. Ser140 is a substrate binding site. Tyr194 (proton acceptor) is an active-site residue. Residues 194–198 and Asp239 contribute to the NADP(+) site; that span reads YGVSK.

The protein belongs to the short-chain dehydrogenases/reductases (SDR) family. Detected in ovary, pancreas, intestine, colon, kidney, brain, thymus, lung, heart, liver, spleen, leukocyte, prostate and testis.

The protein resides in the cytoplasm. It carries out the reaction a secondary alcohol + NADP(+) = a ketone + NADPH + H(+). It catalyses the reaction a quinone + NADPH + H(+) = a quinol + NADP(+). Catalyzes the NADPH-dependent reduction of carbonyl compounds to their corresponding alcohols. Has low NADPH-dependent oxidoreductase activity. Acts on several orthoquinones, acts as well on non-quinone compounds, such as isatin or on the anticancer drug oracin. Best substrates for CBR3 is 1,2- naphthoquinone, hence could play a role in protection against cytotoxicity of exogenous quinones. Exerts activity toward ortho-quinones but not paraquinones. No endogenous substrate for CBR3 except isatin has been identified. In Homo sapiens (Human), this protein is Carbonyl reductase [NADPH] 3.